The sequence spans 389 residues: Putative F-box protein At1g47790 (389 aa).

The F-box domain maps to 19–65 (SKPTSSFPLDLASEILLRLPVKSVVRFRCVSKLWSSIITDPYFIKTY).

This chain is Putative F-box protein At1g47790, found in Arabidopsis thaliana (Mouse-ear cress).